Consider the following 77-residue polypeptide: Defensin-like protein 161 (77 aa).

A signal peptide spans 1 to 27 (MAKLSCSYLLVFMLVFSAILMVEKVEG). 4 disulfide bridges follow: cysteine 30-cysteine 77, cysteine 40-cysteine 59, cysteine 45-cysteine 71, and cysteine 49-cysteine 73.

It belongs to the DEFL family.

It localises to the secreted. The sequence is that of Defensin-like protein 161 (LCR27) from Arabidopsis thaliana (Mouse-ear cress).